Here is a 142-residue protein sequence, read N- to C-terminus: MPFGEYPYTIDDKGRVVMPPAFREFVEDGLILTRGMEGCLYAFPLPGWKRVEEQLEGLPLTDAGSRAFVRFFYSGASKARLDNQSRVSIPQTLRAFAGLDSDVIVAGAPGRLEFWNPQRWEAAIAAVQAEPPQPDLLANFVA.

2 consecutive SpoVT-AbrB domains span residues 5–47 (EYPY…PLPG) and 76–119 (ASKA…NPQR).

This sequence belongs to the MraZ family. Forms oligomers.

It is found in the cytoplasm. The protein localises to the nucleoid. The protein is Transcriptional regulator MraZ of Deinococcus radiodurans (strain ATCC 13939 / DSM 20539 / JCM 16871 / CCUG 27074 / LMG 4051 / NBRC 15346 / NCIMB 9279 / VKM B-1422 / R1).